A 311-amino-acid chain; its full sequence is Malate dehydrogenase (311 aa).

NAD(+) is bound by residues 7–13 (GAAGGIG) and aspartate 34. Residues arginine 81 and arginine 87 each contribute to the substrate site. Residues asparagine 94 and 117–119 (ITN) each bind NAD(+). Substrate is bound by residues asparagine 119 and arginine 153. Residue histidine 177 is the Proton acceptor of the active site. Position 227 (methionine 227) interacts with NAD(+).

Belongs to the LDH/MDH superfamily. MDH type 1 family. In terms of assembly, homodimer.

The enzyme catalyses (S)-malate + NAD(+) = oxaloacetate + NADH + H(+). In terms of biological role, catalyzes the reversible oxidation of malate to oxaloacetate. The chain is Malate dehydrogenase from Shewanella baltica (strain OS155 / ATCC BAA-1091).